A 624-amino-acid polypeptide reads, in one-letter code: Chaperone protein HtpG (624 aa).

The tract at residues 1–336 (MKGQETRGFQ…SSDLPLNVSR (336 aa)) is a; substrate-binding. Residues 337–552 (EILQDSTVTR…ADEMSTQMAK (216 aa)) form a b region. The segment at 553–624 (LFAAAGQKVP…IRRMNQLLVS (72 aa)) is c.

It belongs to the heat shock protein 90 family. In terms of assembly, homodimer.

The protein localises to the cytoplasm. Its function is as follows. Molecular chaperone. Has ATPase activity. This is Chaperone protein HtpG from Escherichia coli O139:H28 (strain E24377A / ETEC).